A 152-amino-acid polypeptide reads, in one-letter code: Pleckstrin homology-like domain family A member 2 (152 aa).

Phosphoserine is present on residues Ser-3 and Ser-42. One can recognise a PH domain in the interval 7–99 (VLREGELEKR…WNAAIALALI (93 aa)). Residues 112-152 (SRQERTAPAAPAEDAVAAAAAAPSEPSEPSRPSPQPKPRTP) are disordered. Residues 118-138 (APAAPAEDAVAAAAAAPSEPS) are compositionally biased toward low complexity. The span at 140–152 (PSRPSPQPKPRTP) shows a compositional bias: pro residues. Residues Ser-141 and Ser-144 each carry the phosphoserine modification. Thr-151 bears the Phosphothreonine mark.

Belongs to the PHLDA2 family. Expressed in placenta and adult prostate gland. In placenta, it is present in all cells of the villous cytotrophoblast. The protein is absent in cells from hydatidiform moles. Hydatidiform mole is a gestation characterized by abnormal development of both fetus and trophoblast. The majority of hydatidiform moles are associated with an excess of paternal to maternal genomes and are likely to result from the abnormal expression of imprinted genes (at protein level). Expressed at low levels in adult liver and lung, and fetal liver. Expressed in adult brain and neuroblastoma, medullablastoma and glioblastoma cell lines.

The protein localises to the cytoplasm. Its subcellular location is the membrane. Its function is as follows. Plays a role in regulating placenta growth. May act via its PH domain that competes with other PH domain-containing proteins, thereby preventing their binding to membrane lipids. The chain is Pleckstrin homology-like domain family A member 2 (PHLDA2) from Homo sapiens (Human).